We begin with the raw amino-acid sequence, 202 residues long: MYKRLVQEFFPKLDFENLEKYVNLIEFSNKNFNLTAFSGDILWKEGIFESIFTMNFIVGLVNNKENKKLKILDIGAGSGFPSIPFLITNPEIELTISESMQKRCQFLKDISEKLDLKFNLICKPVQEIDPQKFDIITARAVANLEKLEKITKKIHFPKTLLAFIKGPKVFNEVQNCKNCNYKIIKVNNNINKKIFIAFKQVS.

S-adenosyl-L-methionine is bound by residues glycine 75, phenylalanine 80, 125–126 (VQ), and arginine 139.

Belongs to the methyltransferase superfamily. RNA methyltransferase RsmG family.

The protein resides in the cytoplasm. Specifically methylates the N7 position of a guanine in 16S rRNA. The chain is Ribosomal RNA small subunit methyltransferase G from Mesomycoplasma hyopneumoniae (strain 7448) (Mycoplasma hyopneumoniae).